Here is a 366-residue protein sequence, read N- to C-terminus: MTKLRVGLLFGGRSGEHEVSIKSARAIAKALSVDENASKYEILPFYIQKDGRWLAGEAPQKVLETGSPLLEAEQSTSEGNLTSNPQVQTLSKWESPSQVAQVDIWFPVLHGPNGEDGTIQGLLTLMQVPFVGSGVLGSAMGMDKIAMKMTFEQAGLAQVKYKAITRAQVWSNPCVFPKLCDEIEAALGYPAFVKPANLGSSVGIAKVRSRQELEAALDNAASYDRRLVVEAGVVAREVECAVLGNDQPQASVVGEISYDSDFYDYETKYTEDRADLLIPAPIPDAIARQIQDMALQAFAAVDAAGLARVDFFYVEATQEVLINEINTLPGFTATSMYPQLWAHSGVSFPELVDRLIQLALERYSPS.

Residues 148–357 (KMTFEQAGLA…FPELVDRLIQ (210 aa)) form the ATP-grasp domain. 184-239 (EAALGYPAFVKPANLGSSVGIAKVRSRQELEAALDNAASYDRRLVVEAGVVAREVE) contributes to the ATP binding site. Mg(2+)-binding residues include D310, E324, and N326.

This sequence belongs to the D-alanine--D-alanine ligase family. Requires Mg(2+) as cofactor. The cofactor is Mn(2+).

Its subcellular location is the cytoplasm. It catalyses the reaction 2 D-alanine + ATP = D-alanyl-D-alanine + ADP + phosphate + H(+). It participates in cell wall biogenesis; peptidoglycan biosynthesis. In terms of biological role, cell wall formation. The protein is D-alanine--D-alanine ligase of Nostoc punctiforme (strain ATCC 29133 / PCC 73102).